The primary structure comprises 67 residues: MLNLKILALGIAVLGVSLGEGILVANIAKSAARQPEMYGKLQTLMIMGVAFIEGTFFVLLASTFFVG.

2 consecutive transmembrane segments (helical) span residues 6–26 (ILAL…LVAN) and 46–66 (IMGV…TFFV).

Belongs to the ATPase C chain family. As to quaternary structure, F-type ATPases have 2 components, F(1) - the catalytic core - and F(0) - the membrane proton channel. F(1) has five subunits: alpha(3), beta(3), gamma(1), delta(1), epsilon(1). F(0) has three main subunits: a(1), b(2) and c(10-14). The alpha and beta chains form an alternating ring which encloses part of the gamma chain. F(1) is attached to F(0) by a central stalk formed by the gamma and epsilon chains, while a peripheral stalk is formed by the delta and b chains.

It localises to the cell membrane. F(1)F(0) ATP synthase produces ATP from ADP in the presence of a proton or sodium gradient. F-type ATPases consist of two structural domains, F(1) containing the extramembraneous catalytic core and F(0) containing the membrane proton channel, linked together by a central stalk and a peripheral stalk. During catalysis, ATP synthesis in the catalytic domain of F(1) is coupled via a rotary mechanism of the central stalk subunits to proton translocation. Its function is as follows. Key component of the F(0) channel; it plays a direct role in translocation across the membrane. A homomeric c-ring of between 10-14 subunits forms the central stalk rotor element with the F(1) delta and epsilon subunits. The sequence is that of ATP synthase subunit c from Streptococcus mutans serotype c (strain ATCC 700610 / UA159).